The following is a 568-amino-acid chain: 2-succinyl-5-enolpyruvyl-6-hydroxy-3-cyclohexene-1-carboxylate synthase (568 aa).

It belongs to the TPP enzyme family. MenD subfamily. In terms of assembly, homodimer. Mg(2+) serves as cofactor. The cofactor is Mn(2+). Thiamine diphosphate is required as a cofactor.

The catalysed reaction is isochorismate + 2-oxoglutarate + H(+) = 5-enolpyruvoyl-6-hydroxy-2-succinyl-cyclohex-3-ene-1-carboxylate + CO2. It functions in the pathway quinol/quinone metabolism; 1,4-dihydroxy-2-naphthoate biosynthesis; 1,4-dihydroxy-2-naphthoate from chorismate: step 2/7. Its pathway is quinol/quinone metabolism; menaquinone biosynthesis. Catalyzes the thiamine diphosphate-dependent decarboxylation of 2-oxoglutarate and the subsequent addition of the resulting succinic semialdehyde-thiamine pyrophosphate anion to isochorismate to yield 2-succinyl-5-enolpyruvyl-6-hydroxy-3-cyclohexene-1-carboxylate (SEPHCHC). This chain is 2-succinyl-5-enolpyruvyl-6-hydroxy-3-cyclohexene-1-carboxylate synthase, found in Pasteurella multocida (strain Pm70).